Reading from the N-terminus, the 416-residue chain is Putative nucleoside permease NupX (416 aa).

The Periplasmic portion of the chain corresponds to 1-2 (MD). Residues 3 to 23 (VMRSVLGMVVLLTIAFLLSVN) traverse the membrane as a helical segment. Residues 24–31 (KKKISLRT) lie on the Cytoplasmic side of the membrane. Residues 32–52 (VGAALVLQVVIGGIMLWLPPG) traverse the membrane as a helical segment. At 53–95 (RWVAEKVAFGVHKVMAYSDAGSAFIFGSLVGPKMDTLFDGAGF) the chain is on the periplasmic side. A helical membrane pass occupies residues 96 to 118 (IFGFRVLPAIIFVTALVSILYYI). The Cytoplasmic segment spans residues 119-172 (GVMGILIRILGGIFQKALNISKIESFVAVTTIFLGQNEIPAIVKPFIDRLNRNE). Residues 173–193 (LFTAICSGMASIAGSTMIGYA) traverse the membrane as a helical segment. Over 194–196 (ALG) the chain is Periplasmic. A helical transmembrane segment spans residues 197–217 (VPVEYLLAASLMAIPGGILFA). Over 218-246 (RLLSPATESSQVSFNNLSFTETPPKSIIE) the chain is Cytoplasmic. The helical transmembrane segment at 247-267 (AAATGAMTGLKIAAGVATVVM) threads the bilayer. Residues 268 to 352 (AFVAIIALIN…QTAGTLDAKT (85 aa)) are Periplasmic-facing. The chain crosses the membrane as a helical span at residues 353–373 (VAIISFALCGFANFGSIGVVV). Residues 374 to 394 (GAFSAVAPHRAPEIAQLGLRA) lie on the Cytoplasmic side of the membrane. A helical transmembrane segment spans residues 395-415 (LAAATLSNLMSATIAGFFIGL). Residue A416 is a topological domain, periplasmic.

This sequence belongs to the concentrative nucleoside transporter (CNT) (TC 2.A.41) family.

Its subcellular location is the cell inner membrane. The polypeptide is Putative nucleoside permease NupX (nupX) (Escherichia coli (strain K12)).